Reading from the N-terminus, the 1755-residue chain is BCL-6 corepressor (1755 aa).

Positions 309-345 (NSKQPRVPSAKAVTSGLPGDTALLLPPSPRPSPRVHL) are disordered. Phosphoserine occurs at positions 336, 340, 365, and 367. The segment at 388–438 (LSNGKYPKAPEGGEGAQPVPGHARKTAVQDRKDGSSPPLLEKQTVTKDVTD) is disordered. K392 bears the N6-acetyllysine mark. S423 is subject to Phosphoserine. The tract at residues 498–514 (RSEIISTAPSSWVVPGP) is interaction with BCL6. Over residues 557–578 (VSGSVSSAGRPASASPAPNANA) the composition is skewed to low complexity. Disordered regions lie at residues 557-641 (VSGS…IFLS), 737-760 (ITKEEKPERRSRSHERARYEDPTL), 773-794 (TKLHPDVPTDKNLKPNPNWNQG), and 815-844 (AKTDTNVSKPSFAAESVGQSAEPPKPSVEP). Polar residues predominate over residues 580–594 (GTKTSRSSVETTPSV). Residues 605-620 (PAKHSSSTSSKGAKAS) are compositionally biased toward low complexity. Residues 775-785 (LHPDVPTDKNL) show a composition bias toward basic and acidic residues. K786 is covalently cross-linked (Glycyl lysine isopeptide (Lys-Gly) (interchain with G-Cter in SUMO2)). K872 is covalently cross-linked (Glycyl lysine isopeptide (Lys-Gly) (interchain with G-Cter in SUMO2)). Disordered regions lie at residues 1071 to 1187 (IAEQ…EDPH) and 1220 to 1328 (QQVS…KENQ). Residues 1076–1107 (ESERCEYSVGNKHRDPFEAPEDKDLPVEKYFV) are compositionally biased toward basic and acidic residues. Phosphoserine is present on residues S1127 and S1139. Over residues 1166–1175 (SKDDWPEREM) the composition is skewed to basic and acidic residues. A compositionally biased stretch (polar residues) spans 1238–1252 (TQATQPEAIPQGTNI). Basic and acidic residues predominate over residues 1253-1279 (TEEKPGRKRAEAKGNRSWSEESLKPSD). K1256 is covalently cross-linked (Glycyl lysine isopeptide (Lys-Gly) (interchain with G-Cter in SUMO2)). A phosphoserine mark is found at S1290, S1345, and S1410. K1413 participates in a covalent cross-link: Glycyl lysine isopeptide (Lys-Gly) (interchain with G-Cter in SUMO2). Polar residues predominate over residues 1430-1447 (QSTQLPCSSSPQETTQSR). Positions 1430-1451 (QSTQLPCSSSPQETTQSRPMPP) are disordered. ANK repeat units follow at residues 1462-1495 (AGETLLQRAARLGYEEVVLYCLENKICDVNHRDN), 1496-1525 (AGYCALHEACARGWLNIVRHLLEYGADVNC), and 1529-1558 (DGTRPLHDAVENDHLEIVRLLLSYGADPTL). A necessary and sufficient for interaction with PCGF1 region spans residues 1634–1748 (SDVFEFEFSE…SSVEWLHPSD (115 aa)).

This sequence belongs to the BCOR family. Interacts with BCL6; the interaction is direct. Forms ternary complexes with BCL6 and SMRT/NCOR2 on selected target genes promoters; potently repress expression. Can interact with HDAC1, HDAC3 and HDAC5. Interacts with PCGF1; the interaction is direct. Interacts with KDM2B. Component of an approximately 800 kDa repressive BCOR complex at least composed of BCOR, RYBP, PCGF1, RING1, RNF2/RING2, KDM2B and SKP1. Interacts with CPNE4 (via VWFA domain). Isoform 1 may interact with MLLT3/AF9. As to expression, ubiquitously expressed.

It localises to the nucleus. In terms of biological role, transcriptional corepressor. May specifically inhibit gene expression when recruited to promoter regions by sequence-specific DNA-binding proteins such as BCL6 and MLLT3. This repression may be mediated at least in part by histone deacetylase activities which can associate with this corepressor. Involved in the repression of TFAP2A; impairs binding of BCL6 and KDM2B to TFAP2A promoter regions. Via repression of TFAP2A acts as a negative regulator of osteo-dentiogenic capacity in adult stem cells; the function implies inhibition of methylation on histone H3 'Lys-4' (H3K4me3) and 'Lys-36' (H3K36me2). This is BCL-6 corepressor (BCOR) from Homo sapiens (Human).